Consider the following 548-residue polypeptide: Thermostable neutral protease NprT (548 aa).

The first 25 residues, Met-1–Ala-25, serve as a signal peptide directing secretion. Residues Lys-26–Pro-229 constitute a propeptide, activation peptide. Residues Asp-289, Asp-291, Gln-293, and Asp-370 each coordinate Ca(2+). His-374 is a binding site for Zn(2+). Glu-375 is a catalytic residue. Residues His-378 and Glu-398 each coordinate Zn(2+). The Ca(2+) site is built by Glu-409, Asn-415, Asp-417, Glu-419, Glu-422, Tyr-425, Thr-426, Val-429, and Asp-432. The Proton donor role is filled by His-463.

This sequence belongs to the peptidase M4 family. The cofactor is Ca(2+). Zn(2+) serves as cofactor.

The protein resides in the secreted. With respect to regulation, its casein hydrolytic activity is inhibited almost completely by a chelating agent (EDTA), whereas neither diisopropyl fluorophosphate nor phenylmethylsulfonyl fluoride inhibit the proteolytic activity in vitro. Extracellular zinc metalloprotease. In Geobacillus stearothermophilus (Bacillus stearothermophilus), this protein is Thermostable neutral protease NprT (nprT).